Reading from the N-terminus, the 202-residue chain is Josephin-1 (202 aa).

The segment at 1–22 (MSCVPWKGDKAKAESSDLPQAA) is disordered. Serine 15 bears the Phosphoserine mark. One can recognise a Josephin domain in the interval 23-202 (PPQIYHEKQR…EAHQSWRADV (180 aa)). Cysteine 36 functions as the Nucleophile in the catalytic mechanism. Histidine 139 functions as the Proton acceptor in the catalytic mechanism.

Interacts with beta-actin/ACTB. In terms of processing, monoubiquitinated. Ubiquitination activates deubiquitination activity in vitro. As to expression, widely expressed (at protein level).

It is found in the cell membrane. The protein localises to the cytoplasm. It catalyses the reaction Thiol-dependent hydrolysis of ester, thioester, amide, peptide and isopeptide bonds formed by the C-terminal Gly of ubiquitin (a 76-residue protein attached to proteins as an intracellular targeting signal).. Deubiquitinates monoubiquitinated probes (in vitro). When ubiquitinated, cleaves 'Lys-63'-linked and 'Lys-48'-linked poly-ubiquitin chains (in vitro), hence may act as a deubiquitinating enzyme. May increase macropinocytosis and suppress clathrin- and caveolae-mediated endocytosis. May enhance membrane dynamics and cell motility independently of its catalytic activity. This chain is Josephin-1 (Josd1), found in Mus musculus (Mouse).